The primary structure comprises 1321 residues: C-Jun-amino-terminal kinase-interacting protein 4 (1321 aa).

Position 1 is an N-acetylmethionine (methionine 1). The RH1 domain maps to 7–95 (VVYQEEPGGS…ITQYEREKAL (89 aa)). Residues 66–166 (AQDQEHQVEL…NALHQRHTEM (101 aa)) adopt a coiled-coil conformation. A phosphoserine mark is found at serine 109, serine 183, serine 185, serine 194, and serine 203. The tract at residues 203–308 (SLGIFPLPAG…EGFVKGTDTS (106 aa)) is disordered. Threonine 217 carries the post-translational modification Phosphothreonine. The segment covering 236-248 (ELSQPRSHTSLKV) has biased composition (polar residues). Phosphoserine is present on residues serine 238, serine 251, serine 265, serine 268, and serine 272. Over residues 266 to 285 (DISQGGSKATTPASTANSDV) the composition is skewed to polar residues. Threonine 292 is modified (phosphothreonine). Residues serine 311, serine 329, serine 332, and serine 347 each carry the phosphoserine modification. Positions 322-332 (AQETRNVSTES) are enriched in polar residues. Positions 322–341 (AQETRNVSTESGENEEKSEV) are disordered. Phosphothreonine occurs at positions 348, 365, and 418. A coiled-coil region spans residues 408 to 534 (REVENLILEN…LQEAVRWTEM (127 aa)). A compositionally biased stretch (basic and acidic residues) spans 473 to 489 (LRKARAEAEDARQKAKD). 2 disordered regions span residues 473–500 (LRKA…TAQR) and 563–600 (SSNA…SQLP). The RH2 domain occupies 500-604 (RKRFTRVEMA…TLSQLPGDKS (105 aa)). Threonine 586 bears the Phosphothreonine mark. The residue at position 588 (serine 588) is a Phosphoserine. Threonine 595 bears the Phosphothreonine mark. Residues serine 705, serine 728, serine 730, serine 732, and serine 733 each carry the phosphoserine modification. The stretch at 724–758 (SKQRSASQSSLDKLDQELKEQQKEFKNQEELSSQV) forms a coiled coil. The segment at 853 to 883 (TGAATSPSTNGASPVIEKPPEMETENSEVDE) is disordered. Residues 855 to 864 (AATSPSTNGA) show a composition bias toward polar residues. Over residues 874–883 (METENSEVDE) the composition is skewed to acidic residues. At serine 1188 the chain carries Phosphoserine. The disordered stretch occupies residues 1239–1267 (PQSSSGGADLTADKAGSSAQEPSSQTPLK). The span at 1255–1266 (SSAQEPSSQTPL) shows a compositional bias: polar residues. A Phosphothreonine modification is found at threonine 1264.

The protein belongs to the JIP scaffold family. As to quaternary structure, homodimer. The homodimer interacts with ARF6, forming a heterotetramer. Homooligomer. Interacts with MAX, MAPK8, MAPK14, MAP3K3, MYC, and MAP2K4. Interacts with KNS2. Interaction with KNS2 is important in the formation of ternary complex with MAPK8. Interacts with PIP4P1. Interacts with PIKFYVE. In terms of processing, phosphorylated by MAPK8 and MAPK14. Highly expressed in brain, kidney, liver, heart.

It is found in the cytoplasm. The protein localises to the perinuclear region. It localises to the lysosome membrane. Functionally, the JNK-interacting protein (JIP) group of scaffold proteins selectively mediates JNK signaling by aggregating specific components of the MAPK cascade to form a functional JNK signaling module. Regulates lysosomal positioning by acting as an adapter protein which links PIP4P1-positive lysosomes to the dynein-dynactin complex. Assists PIKFYVE selective functionality in microtubule-based endosome-to-TGN trafficking. The chain is C-Jun-amino-terminal kinase-interacting protein 4 from Mus musculus (Mouse).